Consider the following 645-residue polypeptide: Glucans biosynthesis glucosyltransferase H (645 aa).

Polar residues predominate over residues 1–12 (MDGTVTLSSTPT). The segment at 1–22 (MDGTVTLSSTPTAIPPVSALDA) is disordered. 7 helical membrane passes run 64–84 (LIGG…SVLW), 98–118 (LFTL…AGFV), 423–443 (APMW…GVGI), 465–485 (AIWI…LGYI), 504–524 (AVSI…VMYL), 559–579 (YGGL…VSPA), and 580–600 (LAAW…VVAL).

This sequence belongs to the glycosyltransferase 2 family. OpgH subfamily.

The protein localises to the cell inner membrane. It participates in glycan metabolism; osmoregulated periplasmic glucan (OPG) biosynthesis. Its function is as follows. Involved in the biosynthesis of osmoregulated periplasmic glucans (OPGs). The chain is Glucans biosynthesis glucosyltransferase H from Xanthomonas oryzae pv. oryzae (strain MAFF 311018).